Here is a 122-residue protein sequence, read N- to C-terminus: Large ribosomal subunit protein uL14 (122 aa).

The protein belongs to the universal ribosomal protein uL14 family. In terms of assembly, part of the 50S ribosomal subunit. Forms a cluster with proteins L3 and L19. In the 70S ribosome, L14 and L19 interact and together make contacts with the 16S rRNA in bridges B5 and B8.

In terms of biological role, binds to 23S rRNA. Forms part of two intersubunit bridges in the 70S ribosome. The sequence is that of Large ribosomal subunit protein uL14 from Acinetobacter baumannii (strain SDF).